The primary structure comprises 227 residues: MSIKVILTDIEGTTSAVSFVFDVLFPYAAKHLPDFVRQNAQRADVAEQLDAVRRDSNEPQADVERVVEILLAWIAEDRKATPLKALQGMVWEQGYQAGQLKGHVYPDAVEALQRWHQAGYQLFVYSSGSIQAQKLIFGCSEAGDLTPLFSGYFDTTSGPKREPQSYTNIQQAIGVEPQEILFLSDIVQELDAAQSAGLQTCGLAREGGELEGHVTVDSFTGIEPEAF.

This sequence belongs to the HAD-like hydrolase superfamily. MasA/MtnC family. As to quaternary structure, monomer. Mg(2+) is required as a cofactor.

The catalysed reaction is 5-methylsulfanyl-2,3-dioxopentyl phosphate + H2O = 1,2-dihydroxy-5-(methylsulfanyl)pent-1-en-3-one + phosphate. It participates in amino-acid biosynthesis; L-methionine biosynthesis via salvage pathway; L-methionine from S-methyl-5-thio-alpha-D-ribose 1-phosphate: step 3/6. It functions in the pathway amino-acid biosynthesis; L-methionine biosynthesis via salvage pathway; L-methionine from S-methyl-5-thio-alpha-D-ribose 1-phosphate: step 4/6. Its function is as follows. Bifunctional enzyme that catalyzes the enolization of 2,3-diketo-5-methylthiopentyl-1-phosphate (DK-MTP-1-P) into the intermediate 2-hydroxy-3-keto-5-methylthiopentenyl-1-phosphate (HK-MTPenyl-1-P), which is then dephosphorylated to form the acireductone 1,2-dihydroxy-3-keto-5-methylthiopentene (DHK-MTPene). The sequence is that of Enolase-phosphatase E1 from Pseudomonas fluorescens (strain Pf0-1).